The sequence spans 59 residues: Large ribosomal subunit protein bL32 (59 aa).

The segment covering 1–15 (MAVPKRKTSKSKRDM) has biased composition (basic residues). The segment at 1 to 21 (MAVPKRKTSKSKRDMRRASNS) is disordered.

It belongs to the bacterial ribosomal protein bL32 family.

The sequence is that of Large ribosomal subunit protein bL32 from Alkaliphilus metalliredigens (strain QYMF).